The primary structure comprises 205 residues: Cytochrome c oxidase subunit 3 (205 aa).

Helical transmembrane passes span 29 to 49, 72 to 92, 104 to 124, 142 to 162, and 184 to 204; these read TIVF…MYFV, ALLI…GVFA, WFLV…YEYI, FFIT…AFVV, and SYYW…IYFI.

Associates with subunits I, II and IV to form cytochrome c oxidase. The 4 subunit cytochrome c oxidase forms a supercomplex with the menaquinol-cytochrome c reductase complex (cytochrome bc1).

Its subcellular location is the cell membrane. The enzyme catalyses 4 Fe(II)-[cytochrome c] + O2 + 8 H(+)(in) = 4 Fe(III)-[cytochrome c] + 2 H2O + 4 H(+)(out). In Corynebacterium glutamicum (strain ATCC 13032 / DSM 20300 / JCM 1318 / BCRC 11384 / CCUG 27702 / LMG 3730 / NBRC 12168 / NCIMB 10025 / NRRL B-2784 / 534), this protein is Cytochrome c oxidase subunit 3 (ctaE).